Consider the following 272-residue polypeptide: Energy-coupling factor transporter ATP-binding protein EcfA1 (272 aa).

Positions 5-239 (IKIDNLKYSY…RKALHENGLE (235 aa)) constitute an ABC transporter domain. 37–44 (GHNGSGKS) provides a ligand contact to ATP. Glu-163 acts as the Proton acceptor in catalysis.

Belongs to the ABC transporter superfamily. Energy-coupling factor EcfA family. Forms a stable energy-coupling factor (ECF) transporter complex probably composed of 2 membrane-embedded substrate-binding proteins (S component), 2 ATP-binding proteins (A component) and 2 transmembrane proteins (T component). This complex interacts with a number of substrate-specific components, including FolT, PanT and RibU for 5-formyltetrahydrofolate, pantothenate and riboflavin respectively.

Its subcellular location is the cell membrane. ATP-binding (A) component of a common energy-coupling factor (ECF) ABC-transporter complex. Unlike classic ABC transporters this ECF transporter provides the energy necessary to transport a number of different substrates including 5-formyltetrahydrofolate, pantothenate and riboflavin. Expression of the complex plus FolT in E.coli allows 5-formyltetrahydrofolate uptake; 5-formyltetrahydrofolate is not taken up in the absence of FolT or the EcfA1A2T complex. The polypeptide is Energy-coupling factor transporter ATP-binding protein EcfA1 (Leuconostoc mesenteroides subsp. mesenteroides (strain ATCC 8293 / DSM 20343 / BCRC 11652 / CCM 1803 / JCM 6124 / NCDO 523 / NBRC 100496 / NCIMB 8023 / NCTC 12954 / NRRL B-1118 / 37Y)).